We begin with the raw amino-acid sequence, 185 residues long: Bcl-2-like protein 10 (185 aa).

The BH1 signature appears at 76-95 (LSNDQEFNWGRLVMLLAFVG). A BH2 motif is present at residues 138–149 (WLEAHGGWDGFC). The chain crosses the membrane as a helical span at residues 160 to 182 (FWRRLLIRAILSCFFATAIFYIW).

Belongs to the Bcl-2 family. Interacts with BAX. Interacts with BCL2, BCL2L1/BCLX. Interacts with APAF1. Interacts with ITPR1, ITPR2 and ITPR3; the interaction with ITPR1 is increased in the presence of AHCLY1. Interacts with AHCYL1. Interacts with HIP1R (via ENTH and I/LWEQ domains). Interacts with CASP9. Interacts with BCL2L11/BIM. Interacts with BIK. Interacts with UBQLN4. Interacts with NME2/NM23-H2. Interacts with and PMAIP1/NOXA. Interacts with TPX2. Interacts with UBQLN1; in the cytoplasm. Interacts (via BH1 domain) with BECN1. Ca(2+) is required as a cofactor. In terms of processing, monoubiquitinated by UBQLN1; results in stabilization of BCL2L10 protein abundance and in relocalization from mitochondria to cytoplasm. In terms of tissue distribution, expressed in oligodendroglial lineage cells.

It localises to the mitochondrion. It is found in the nucleus membrane. Its subcellular location is the endoplasmic reticulum. The protein resides in the cytoplasm. The protein localises to the cytoskeleton. It localises to the spindle. Functionally, promotes cell survival by suppressing apoptosis induced by BAX but not BAK. Increases binding of AHCYL1/IRBIT to ITPR1. Reduces ITPR1-mediated calcium release from the endoplasmic reticulum cooperatively with AHCYL1/IRBIT under normal cellular conditions. Under apoptotic stress conditions, dissociates from ITPR1 and is displaced from mitochondria-associated endoplasmic reticulum membranes, leading to increased Ca(2+) transfer to mitochondria which promotes apoptosis. Required for the correct formation of the microtubule organizing center during oocyte cell division, potentially via regulation of protein abundance and localization of other microtubule organizing center components such as AURKA and TPX2. This is Bcl-2-like protein 10 from Rattus norvegicus (Rat).